Consider the following 288-residue polypeptide: Hydroxyethylthiazole kinase (288 aa).

Residue Met55 coordinates substrate. Residues Asn131 and Ser177 each coordinate ATP. Residue Gly204 coordinates substrate.

This sequence belongs to the Thz kinase family. Mg(2+) serves as cofactor.

It catalyses the reaction 5-(2-hydroxyethyl)-4-methylthiazole + ATP = 4-methyl-5-(2-phosphooxyethyl)-thiazole + ADP + H(+). It functions in the pathway cofactor biosynthesis; thiamine diphosphate biosynthesis; 4-methyl-5-(2-phosphoethyl)-thiazole from 5-(2-hydroxyethyl)-4-methylthiazole: step 1/1. Catalyzes the phosphorylation of the hydroxyl group of 4-methyl-5-beta-hydroxyethylthiazole (THZ). The sequence is that of Hydroxyethylthiazole kinase from Haloquadratum walsbyi (strain DSM 16790 / HBSQ001).